The following is a 305-amino-acid chain: Glycine--tRNA ligase alpha subunit (305 aa).

It belongs to the class-II aminoacyl-tRNA synthetase family. In terms of assembly, tetramer of two alpha and two beta subunits.

It is found in the cytoplasm. The catalysed reaction is tRNA(Gly) + glycine + ATP = glycyl-tRNA(Gly) + AMP + diphosphate. The sequence is that of Glycine--tRNA ligase alpha subunit from Streptococcus pneumoniae (strain P1031).